A 501-amino-acid chain; its full sequence is Lysine--tRNA ligase (501 aa).

Residues Glu402 and Glu409 each contribute to the Mg(2+) site.

This sequence belongs to the class-II aminoacyl-tRNA synthetase family. Homodimer. Mg(2+) serves as cofactor.

It is found in the cytoplasm. It carries out the reaction tRNA(Lys) + L-lysine + ATP = L-lysyl-tRNA(Lys) + AMP + diphosphate. This Helicobacter pylori (strain HPAG1) protein is Lysine--tRNA ligase.